A 150-amino-acid polypeptide reads, in one-letter code: Ribosomal RNA large subunit methyltransferase H (150 aa).

S-adenosyl-L-methionine contacts are provided by residues Leu-71, Gly-100, and 118-123 (FSQMTF).

This sequence belongs to the RNA methyltransferase RlmH family. Homodimer.

Its subcellular location is the cytoplasm. It catalyses the reaction pseudouridine(1915) in 23S rRNA + S-adenosyl-L-methionine = N(3)-methylpseudouridine(1915) in 23S rRNA + S-adenosyl-L-homocysteine + H(+). Its function is as follows. Specifically methylates the pseudouridine at position 1915 (m3Psi1915) in 23S rRNA. The protein is Ribosomal RNA large subunit methyltransferase H of Mycoplasmopsis agalactiae (strain NCTC 10123 / CIP 59.7 / PG2) (Mycoplasma agalactiae).